A 431-amino-acid polypeptide reads, in one-letter code: Serine--tRNA ligase (431 aa).

236-238 (TAE) lines the L-serine pocket. ATP is bound at residue 267–269 (RSE). Glu-290 provides a ligand contact to L-serine. 354–357 (EISS) serves as a coordination point for ATP. Position 389 (Ser-389) interacts with L-serine.

It belongs to the class-II aminoacyl-tRNA synthetase family. Type-1 seryl-tRNA synthetase subfamily. Homodimer. The tRNA molecule binds across the dimer.

It localises to the cytoplasm. The catalysed reaction is tRNA(Ser) + L-serine + ATP = L-seryl-tRNA(Ser) + AMP + diphosphate + H(+). It catalyses the reaction tRNA(Sec) + L-serine + ATP = L-seryl-tRNA(Sec) + AMP + diphosphate + H(+). It participates in aminoacyl-tRNA biosynthesis; selenocysteinyl-tRNA(Sec) biosynthesis; L-seryl-tRNA(Sec) from L-serine and tRNA(Sec): step 1/1. Functionally, catalyzes the attachment of serine to tRNA(Ser). Is also able to aminoacylate tRNA(Sec) with serine, to form the misacylated tRNA L-seryl-tRNA(Sec), which will be further converted into selenocysteinyl-tRNA(Sec). The polypeptide is Serine--tRNA ligase (Herminiimonas arsenicoxydans).